The chain runs to 753 residues: Ion-translocating oxidoreductase complex subunit C (753 aa).

4Fe-4S ferredoxin-type domains lie at 367 to 397 and 407 to 436; these read EMGEPQEEKGCIRCSACADACPADLLPQQLY and KATAHNLADCIECGACAWVCPSNIPLVQYF. Cysteine 377, cysteine 380, cysteine 383, cysteine 387, cysteine 416, cysteine 419, cysteine 422, and cysteine 426 together coordinate [4Fe-4S] cluster. Disordered stretches follow at residues 517 to 561, 606 to 625, 640 to 659, and 705 to 735; these read AKPD…RKAA, RKAEQQVAPVEAPVAEPVDP, and AKARKAEQQAAQPDLASAAANDDPRKAAVAA. Over residues 526-537 the composition is skewed to basic and acidic residues; that stretch reads AAREARKAEARA. Low complexity-rich tracts occupy residues 610-622, 644-656, and 712-735; these read QQVAPVEAPVAEP and QQAAQPDLASAAANDDPRKAAVAA.

It belongs to the 4Fe4S bacterial-type ferredoxin family. RnfC subfamily. In terms of assembly, the complex is composed of six subunits: RnfA, RnfB, RnfC, RnfD, RnfE and RnfG. [4Fe-4S] cluster is required as a cofactor.

The protein localises to the cell inner membrane. Its function is as follows. Part of a membrane-bound complex that couples electron transfer with translocation of ions across the membrane. In Klebsiella pneumoniae (strain 342), this protein is Ion-translocating oxidoreductase complex subunit C.